The chain runs to 145 residues: Extracellular globin-2 (145 aa).

The Globin domain occupies 3–145; sequence QCGVLEGLKV…HIEDGIKGHH (143 aa). Cys-4 and Cys-133 are oxidised to a cystine. His-96 contributes to the heme b binding site.

Belongs to the globin family. The extracellular hemoglobin of the earthworm consists of 12 subunits that have a hexagonal bilayer structure with a molecular weight near 3.8 million. Each one-twelfth subunit is composed primarily of disulfide linked trimers (chains A, B, and C) and monomers (chain D).

This is Extracellular globin-2 from Lumbricus terrestris (Common earthworm).